Consider the following 369-residue polypeptide: MLGPTPELDQTLQAYDYLLPETFIAQTPLVPRDRSRLLVVQQQAHQHKIFQDLVALLQPGDLLVFNDTRVIPARLLGRKLNSELAQPVEVFLLEPRQPNTWLALVRPGRRLKPGAQIEFGPPERPLLRAEILATDADTRGRIIQFESLVEEPFEDLLEQLGEVPLPPYIQESTAQPEQYQTVYAQHPGAVAAPTAGLHFTPELLARLQSEGINQAHLTLHVGIGTFRPVETDDILQHHMHSEWVDLPAATVDAIRTTKASGGRVIAVGTTVTRALEGACQNGPLVPWQGRTNLFIYPSYQWRVVDGLITNFHLPKSSLLMLVSALVGRERLLALYEDAIAQQYRFYSFGDAMLVLPEAVIAERSPDPVF.

This sequence belongs to the QueA family. In terms of assembly, monomer.

It is found in the cytoplasm. It catalyses the reaction 7-aminomethyl-7-carbaguanosine(34) in tRNA + S-adenosyl-L-methionine = epoxyqueuosine(34) in tRNA + adenine + L-methionine + 2 H(+). It participates in tRNA modification; tRNA-queuosine biosynthesis. Functionally, transfers and isomerizes the ribose moiety from AdoMet to the 7-aminomethyl group of 7-deazaguanine (preQ1-tRNA) to give epoxyqueuosine (oQ-tRNA). The polypeptide is S-adenosylmethionine:tRNA ribosyltransferase-isomerase (Acaryochloris marina (strain MBIC 11017)).